A 957-amino-acid chain; its full sequence is Dystrophin-related protein 2 (957 aa).

Spectrin repeat units lie at residues 102 to 179 (DHSG…EELE) and 231 to 337 (EQLL…QLQD). Positions 358-383 (WERAISPNKVPYYINHQAQTTCWDHP) constitute a WW domain. The ZZ-type; degenerate zinc finger occupies 605–661 (KHQTKCSICRQCPIKGFRYRSLKQFNVDICQTCFLTGRASKGNKLHYPIMEYYTPTT). Zn(2+) is bound by residues C610, C613, C634, and C637. Residue S748 is modified to Phosphoserine. Low complexity predominate over residues 877-900 (PPTESDGSGSAGSSLASSPQQSEG). The tract at residues 877 to 923 (PPTESDGSGSAGSSLASSPQQSEGSHPREKGQTTPDTEAADDVGSKS) is disordered. Phosphothreonine is present on T910.

In terms of assembly, interacts with PRX; this enhances phosphorylation. Identified in a dystroglycan complex that contains at least PRX, DRP2, UTRN, DMD and DAG1. Detected in fetal brain.

The protein localises to the postsynaptic density. The protein resides in the cell projection. It localises to the dendrite. It is found in the perikaryon. Its subcellular location is the cell membrane. Functionally, required for normal myelination and for normal organization of the cytoplasm and the formation of Cajal bands in myelinating Schwann cells. Required for normal PRX location at appositions between the abaxonal surface of the myelin sheath and the Schwann cell plasma membrane. Possibly involved in membrane-cytoskeleton interactions of the central nervous system. The chain is Dystrophin-related protein 2 (DRP2) from Homo sapiens (Human).